The chain runs to 497 residues: FAD-linked oxidoreductase fogF (497 aa).

The N-terminal stretch at 1–18 is a signal peptide; it reads MRRNILTALACSWLTAHA. The FAD-binding PCMH-type domain maps to 59-229; the sequence is NAPTYAGAIS…TSATYKLHKL (171 aa).

This sequence belongs to the oxygen-dependent FAD-linked oxidoreductase family. FAD serves as cofactor.

The protein operates within secondary metabolite biosynthesis. In terms of biological role, FAD-linked oxidoreductase; part of the gene cluster that mediates the biosynthesis of flavoglaucin and congeners (including aspergin, dihydroauroglaucin and auroglaucin), prenylated salicylaldehyde derivatives carrying a saturated or an unsaturated C-7 side chain. The PKS fogA releases the carboxylic acid (8E,10E,12E)-3,5,7-trihydroxytetradeca-8,10,12-trienoic acid as its product, as well as derivatives with one and two double bonds. FogA is indeed able to reduce the initial triketide, thus being at least partially responsible for the differently saturated heptyl side chains of flavoglaucin congeners. The oxidoreductases fogB, fogC and fogD modify the nascent polyketide in fogA-bound form and, together, fogA, fogB, fogC and fogD are necessary for the formation of the aromatic core and the cyclized PKS products are released as salicyl alcohols. In particular, fogB is responsible for oxidation of a hydroxyl group or reduction of remaining double bond(s) at the C-7 residue whereas fogD is probably involved in the reductive release of the modified PKS products. The cytochrome P450 monooxygenase fogE is then responsible for the hydroxylation at C-3 of the benzene ring. The fogE products are substrates of the prenyltransferase fogH and the prenylated benzyl alcohols are subsequently oxidized by the fogF to produce the final aryl aldehydes flavoglaucin and congeners. The short-chain dehydrogenase fogG does not seem to be involved in the biosynthesis of the prenylated salicylaldehyde derivatives. The sequence is that of FAD-linked oxidoreductase fogF from Aspergillus ruber (strain CBS 135680).